Reading from the N-terminus, the 37-residue chain is Large ribosomal subunit protein bL36c (37 aa).

It belongs to the bacterial ribosomal protein bL36 family.

The protein localises to the plastid. It is found in the chloroplast. The sequence is that of Large ribosomal subunit protein bL36c from Adiantum capillus-veneris (Maidenhair fern).